A 370-amino-acid chain; its full sequence is Mitogen-activated protein kinase mpkC (370 aa).

Positions 19-298 (YANVRPVGLG…AAESLEHPYL (280 aa)) constitute a Protein kinase domain. Residues 25-33 (VGLGAFGLV) and Lys-48 each bind ATP. Asp-140 (proton acceptor) is an active-site residue. Thr-170 carries the post-translational modification Phosphothreonine. The TXY signature appears at 170 to 172 (TGY). Residue Tyr-172 is modified to Phosphotyrosine.

Belongs to the protein kinase superfamily. Ser/Thr protein kinase family. MAP kinase subfamily. HOG1 sub-subfamily. Mg(2+) serves as cofactor. Dually phosphorylated on Thr-170 and Tyr-172, which activates the enzyme.

The enzyme catalyses L-seryl-[protein] + ATP = O-phospho-L-seryl-[protein] + ADP + H(+). It catalyses the reaction L-threonyl-[protein] + ATP = O-phospho-L-threonyl-[protein] + ADP + H(+). Its activity is regulated as follows. Activated by tyrosine and threonine phosphorylation. Functionally, mitogen-activated protein kinase required for growth on media where sorbitol or mannitol is the sole carbon source. The chain is Mitogen-activated protein kinase mpkC (mpkC) from Aspergillus terreus (strain NIH 2624 / FGSC A1156).